A 348-amino-acid chain; its full sequence is tRNA N6-adenosine threonylcarbamoyltransferase (348 aa).

Fe cation-binding residues include H115 and H119. Substrate is bound by residues 138–142 (LVSGG), D171, G184, and N276. D304 is a Fe cation binding site.

The protein belongs to the KAE1 / TsaD family. Requires Fe(2+) as cofactor.

The protein resides in the cytoplasm. The catalysed reaction is L-threonylcarbamoyladenylate + adenosine(37) in tRNA = N(6)-L-threonylcarbamoyladenosine(37) in tRNA + AMP + H(+). Required for the formation of a threonylcarbamoyl group on adenosine at position 37 (t(6)A37) in tRNAs that read codons beginning with adenine. Is involved in the transfer of the threonylcarbamoyl moiety of threonylcarbamoyl-AMP (TC-AMP) to the N6 group of A37, together with TsaE and TsaB. TsaD likely plays a direct catalytic role in this reaction. This is tRNA N6-adenosine threonylcarbamoyltransferase from Xylella fastidiosa (strain M23).